A 368-amino-acid chain; its full sequence is Phosphate acyltransferase (368 aa).

Residues 337-368 (LEQAARDASGAGQASPIAGQPAEPYAAQSSKA) are disordered.

This sequence belongs to the PlsX family. In terms of assembly, homodimer. Probably interacts with PlsY.

Its subcellular location is the cytoplasm. The enzyme catalyses a fatty acyl-[ACP] + phosphate = an acyl phosphate + holo-[ACP]. Its pathway is lipid metabolism; phospholipid metabolism. In terms of biological role, catalyzes the reversible formation of acyl-phosphate (acyl-PO(4)) from acyl-[acyl-carrier-protein] (acyl-ACP). This enzyme utilizes acyl-ACP as fatty acyl donor, but not acyl-CoA. The sequence is that of Phosphate acyltransferase from Paraburkholderia phytofirmans (strain DSM 17436 / LMG 22146 / PsJN) (Burkholderia phytofirmans).